The following is a 493-amino-acid chain: Cyclin-dependent kinase-like 2 (493 aa).

In terms of domain architecture, Protein kinase spans 4-287 (YENLGLVGEG…CAELLHHDFF (284 aa)). ATP is bound by residues 10-18 (VGEGSYGMV) and K33. Residues 45–51 (KKIAMRE) carry the [NKR]KIAxRE motif. The active-site Proton acceptor is D126. Residues 363 to 384 (GEKAEKGNRASNASCLHDSRTS) form a disordered region.

It belongs to the protein kinase superfamily. CMGC Ser/Thr protein kinase family. CDC2/CDKX subfamily. In terms of tissue distribution, expressed in testis and kidney, and at lower level in brain and lung.

Its subcellular location is the cytoplasm. The protein resides in the nucleus. It catalyses the reaction L-seryl-[protein] + ATP = O-phospho-L-seryl-[protein] + ADP + H(+). The catalysed reaction is L-threonyl-[protein] + ATP = O-phospho-L-threonyl-[protein] + ADP + H(+). In Homo sapiens (Human), this protein is Cyclin-dependent kinase-like 2.